The following is a 262-amino-acid chain: Apolipoprotein A-I (262 aa).

A signal peptide spans 1–18 (MKAVVLTLAVLFLTGSQA). Tandem repeats lie at residues 67 to 88 (LKLLDNWDTLASTLSKVREQLG) and 89 to 110 (PVTQEFWDNLEKETAALRQEMN). The interval 67-262 (LKLLDNWDTL…DEASKKLNAQ (196 aa)) is 10 X approximate tandem repeats. At Met109 the chain carries Methionine sulfoxide. Residues 111-121 (KDLEEVKQKVQ) form a 3; half-length repeat. 5 consecutive repeat copies span residues 122–142 (PYLDEFQRKWHEEVEIYRQKV), 144–165 (PLGEEFREGARQKVQELQDRLS), 166–184 (PLAQELRDRARAHVEKQLA), 185–206 (PYSDDLRQRLTARLEALKEGGG), and 207–227 (SLAEYHAKATEQLKALGEKAK). Residues 228-238 (PALEDLRQGLM) form a 9; half-length repeat. Met238 is modified (methionine sulfoxide). The stretch at 239–262 (PVLESLKVSILAAIDEASKKLNAQ) is repeat 10.

This sequence belongs to the apolipoprotein A1/A4/E family. As to quaternary structure, homodimer. Interacts with APOA1BP and CLU. Component of a sperm activating protein complex (SPAP), consisting of APOA1, an immunoglobulin heavy chain, an immunoglobulin light chain and albumin. Interacts with NDRG1. Interacts with SCGB3A2. Interacts with NAXE and YJEFN3. Post-translationally, glycosylated. In terms of processing, palmitoylated. Phosphorylation sites are present in the extracellular medium. Major protein of plasma HDL, also found in chylomicrons.

The protein localises to the secreted. Participates in the reverse transport of cholesterol from tissues to the liver for excretion by promoting cholesterol efflux from tissues and by acting as a cofactor for the lecithin cholesterol acyltransferase (LCAT). As part of the SPAP complex, activates spermatozoa motility. The polypeptide is Apolipoprotein A-I (APOA1) (Pantholops hodgsonii (Chiru)).